The sequence spans 199 residues: MAP6 domain-containing protein 1 (199 aa).

S-palmitoyl cysteine attachment occurs at residues Cys5, Cys10, and Cys11. Residues 33 to 110 form a disordered region; sequence YSDLDSEEPG…SAQSSAPPAP (78 aa). Ser38 is subject to Phosphoserine. Mn regions lie at residues 130-143 and 165-177; these read TTSY…WTGV and DSSP…VPEV. Ser167 bears the Phosphoserine mark.

Belongs to the STOP family. In terms of assembly, interacts with calmodulin. In terms of processing, palmitoylated. Palmitoylation enhances association with microtubules.

Its subcellular location is the golgi apparatus. The protein localises to the cytoplasm. The protein resides in the cytoskeleton. Functionally, may have microtubule-stabilizing activity. The chain is MAP6 domain-containing protein 1 (MAP6D1) from Homo sapiens (Human).